A 278-amino-acid chain; its full sequence is uncharacterized protein (278 aa).

Residues 1–11 (MMIHIHQDKKM) are compositionally biased toward basic and acidic residues. Disordered regions lie at residues 1–107 (MMIH…RYFK) and 206–278 (KVSA…KASR). The span at 62 to 94 (KQSGGKNAKSGSKSAKSGSKSAKSGSKTSKTQS) shows a compositional bias: low complexity. The segment covering 97–107 (KGDESRDRYFK) has biased composition (basic and acidic residues). The segment covering 249–260 (SAKNAKSTGNKK) has biased composition (polar residues). Residues 264 to 278 (KSAGAKKAPAAKASR) are compositionally biased toward low complexity.

This is an uncharacterized protein from Acanthamoeba polyphaga mimivirus (APMV).